Here is a 471-residue protein sequence, read N- to C-terminus: 5-hydroxytryptamine receptor 2A (471 aa).

Topologically, residues Met-1 to Leu-80 are extracellular. 5 N-linked (GlcNAc...) asparagine glycosylation sites follow: Asn-8, Asn-38, Asn-44, Asn-51, and Asn-54. The helical transmembrane segment at Thr-81–Met-97 threads the bilayer. Over Ala-98–Tyr-111 the chain is Cytoplasmic. The helical transmembrane segment at Phe-112–Tyr-137 threads the bilayer. Residues Gly-138 to Lys-146 lie on the Extracellular side of the membrane. Residues Leu-147–Leu-171 traverse the membrane as a helical segment. The cysteines at positions 148 and 227 are disulfide-linked. Asp-155 contributes to the serotonin binding site. A DRY motif; important for ligand-induced conformation changes motif is present at residues Asp-172–Tyr-174. Topologically, residues Asp-172–Lys-191 are cytoplasmic. A helical membrane pass occupies residues Ala-192–Leu-215. Over Gln-216 to Asp-232 the chain is Extracellular. A helical transmembrane segment spans residues Asn-233–Ile-258. Residues Lys-259–Cys-322 are Cytoplasmic-facing. Ser-280 is modified (phosphoserine). The chain crosses the membrane as a helical span at residues Lys-323–Ile-348. Position 343 (Asn-343) interacts with serotonin. Cys-349 and Cys-353 are joined by a disulfide. The Extracellular segment spans residues Cys-349–Asp-356. Residues Val-357–Leu-382 form a helical membrane-spanning segment. Residues Asn-376–Tyr-380 carry the NPxxY motif; important for ligand-induced conformation changes and signaling motif. At Phe-383–Val-471 the chain is on the cytoplasmic side. Positions Lys-450 to Val-471 are disordered. Basic and acidic residues predominate over residues Gln-451–Asn-465. Residues Ser-469–Val-471 carry the PDZ-binding motif.

The protein belongs to the G-protein coupled receptor 1 family. Interacts (via C-terminus) with MPDZ and PATJ. May interact (via C-terminus) with MPP3, PRDX6, DLG4, DLG1, CASK, APBA1 and MAGI2. Interacts with GRM2 and DRD2; this may affect signaling.

The protein localises to the cell membrane. The protein resides in the cell projection. It localises to the dendrite. It is found in the axon. Its subcellular location is the cytoplasmic vesicle. The protein localises to the membrane. The protein resides in the caveola. It localises to the presynapse. G-protein coupled receptor activity is regulated by lipids: oleamide increases HTR2A-mediated activity. Functionally, G-protein coupled receptor for 5-hydroxytryptamine (serotonin). Also functions as a receptor for various drugs and psychoactive substances, including mescaline, psilocybin, 1-(2,5-dimethoxy-4-iodophenyl)-2-aminopropane (DOI) and lysergic acid diethylamide (LSD). Ligand binding causes a conformation change that triggers signaling via guanine nucleotide-binding proteins (G proteins) and modulates the activity of downstream effectors. HTR2A is coupled to G(q)/G(11) G alpha proteins and activates phospholipase C-beta, releasing diacylglycerol (DAG) and inositol 1,4,5-trisphosphate (IP3) second messengers that modulate the activity of phosphatidylinositol 3-kinase and promote the release of Ca(2+) ions from intracellular stores, respectively. Beta-arrestin family members inhibit signaling via G proteins and mediate activation of alternative signaling pathways. Affects neural activity, perception, cognition and mood. Plays a role in the regulation of behavior, including responses to anxiogenic situations and psychoactive substances. Plays a role in intestinal smooth muscle contraction, and may play a role in arterial vasoconstriction. This Macaca mulatta (Rhesus macaque) protein is 5-hydroxytryptamine receptor 2A (HTR2A).